We begin with the raw amino-acid sequence, 947 residues long: MTPLSSPLSQYWQTVVERLPEGFTETSLSAQAKSVLTFSDFALDSVIAHPEWLAELESASPQADEWRHYAGWLQEALAGVCDDASLMRELRLFRRRIMVRIAWAQTLSLVDDETILQQLSHLAETLIVGARDWLYAACCREWGTPCNPQGVPQPLLILGMGKLGGGELNFSSDIDLIFAWPEHGETRGGRRELDNAQFFTRLGQRLIKALDQPTMDGFVYRVDMRLRPFGDSGPLVLSFAALEDYYQEQGRDWERYAMVKARLMGDNDDAWSRELRAMLRPFVFRRYIDFSVIQSLRNMKGMIAREVRRRGLKDNIKLGAGGIREIEFIVQVFQLIRGGREPSLQSRSLLPTLDAIAALHLLPENDVAQLRVAYLFLRRLENLLQSINDEQTQTLPADDLNRARLAWGMKAENWPQLVGELTDHMANVRRVFNELIGDDEADTPQEEERSEPWREVWQDALQEDDSTPVLAHLADEDRRQVLTLIADFRKELDKRPIGPRGRQVLDQLMPHLLADVCSREDAAVTLSRITPLLAGIVTRTTYLELLSEFPGALKHLIMLCAASPMIASQLARYPLLLDELLDPGTLYQPTATDAYRDELRQYLLRVPEEDEEQQLEALRQFKQAQLLRIAAADIAGTLPVMKVSDHLTWLAEAMIDAVVQQAWTQMVARYGQPAHLDERQGRGFAVVGYGKLGGWELGYSSDLDLIFLHDCPMDVMTNGEREIDGRQFYLRLAQRIMHLFSTRTSSGILYEVDARLRPSGAAGMLVTSADAFADYQQHEAWTWEHQALVRARVVYGDPQLTSQFDAVRRTIMTTARDGKTLQTEVREMREKMRAHLGNKHRDRFDIKADEGGITDIEFIAQYLVLRYAHEKPKLTRWSDNVRILELLAQNGIMDEHEAQALTVAYTTLRDELHHLALQELPGHVAQTCFSKERALVQASWRKWLVAV.

Positions 1-440 (MTPLSSPLSQ…VFNELIGDDE (440 aa)) are adenylyl removase. The adenylyl transferase stretch occupies residues 450–947 (SEPWREVWQD…ASWRKWLVAV (498 aa)).

Belongs to the GlnE family. Mg(2+) serves as cofactor.

It catalyses the reaction [glutamine synthetase]-O(4)-(5'-adenylyl)-L-tyrosine + phosphate = [glutamine synthetase]-L-tyrosine + ADP. The enzyme catalyses [glutamine synthetase]-L-tyrosine + ATP = [glutamine synthetase]-O(4)-(5'-adenylyl)-L-tyrosine + diphosphate. Its function is as follows. Involved in the regulation of glutamine synthetase GlnA, a key enzyme in the process to assimilate ammonia. When cellular nitrogen levels are high, the C-terminal adenylyl transferase (AT) inactivates GlnA by covalent transfer of an adenylyl group from ATP to specific tyrosine residue of GlnA, thus reducing its activity. Conversely, when nitrogen levels are low, the N-terminal adenylyl removase (AR) activates GlnA by removing the adenylyl group by phosphorolysis, increasing its activity. The regulatory region of GlnE binds the signal transduction protein PII (GlnB) which indicates the nitrogen status of the cell. In Salmonella schwarzengrund (strain CVM19633), this protein is Bifunctional glutamine synthetase adenylyltransferase/adenylyl-removing enzyme.